A 72-amino-acid chain; its full sequence is Cytochrome b-c1 complex subunit 8-1, mitochondrial (72 aa).

Residues 1–41 (MGKQPVKLKAVVYALSPFQQKIMTGLWKDLPEKIHHKVSEN) are Mitochondrial matrix-facing. Residues 42–58 (WISATLLVTPVVGTYWY) form a helical membrane-spanning segment. Residues 59 to 72 (AQYFKEQEKLEHRF) lie on the Mitochondrial intermembrane side of the membrane.

The protein belongs to the UQCRQ/QCR8 family. As to quaternary structure, component of the ubiquinol-cytochrome c oxidoreductase (cytochrome b-c1 complex, complex III, CIII), a multisubunit enzyme composed of 10 subunits. The complex is composed of 3 respiratory subunits cytochrome b (MT-CYB), cytochrome c1 (CYC1-1 or CYC1-2) and Rieske protein (UCR1-1 or UCR1-2), 2 core protein subunits MPPalpha1 (or MPPalpha2) and MPPB, and 5 low-molecular weight protein subunits QCR7-1 (or QCR7-2), UCRQ-1 (or UCRQ-2), QCR9, UCRY and probably QCR6-1 (or QCR6-2). The complex exists as an obligatory dimer and forms supercomplexes (SCs) in the inner mitochondrial membrane with NADH-ubiquinone oxidoreductase (complex I, CI), resulting in different assemblies (supercomplexes SCI(1)III(2) and SCI(2)III(4)).

It localises to the mitochondrion inner membrane. Functionally, component of the ubiquinol-cytochrome c oxidoreductase, a multisubunit transmembrane complex that is part of the mitochondrial electron transport chain which drives oxidative phosphorylation. The respiratory chain contains 3 multisubunit complexes succinate dehydrogenase (complex II, CII), ubiquinol-cytochrome c oxidoreductase (cytochrome b-c1 complex, complex III, CIII) and cytochrome c oxidase (complex IV, CIV), that cooperate to transfer electrons derived from NADH and succinate to molecular oxygen, creating an electrochemical gradient over the inner membrane that drives transmembrane transport and the ATP synthase. The cytochrome b-c1 complex catalyzes electron transfer from ubiquinol to cytochrome c, linking this redox reaction to translocation of protons across the mitochondrial inner membrane, with protons being carried across the membrane as hydrogens on the quinol. In the process called Q cycle, 2 protons are consumed from the matrix, 4 protons are released into the intermembrane space and 2 electrons are passed to cytochrome c. In Arabidopsis thaliana (Mouse-ear cress), this protein is Cytochrome b-c1 complex subunit 8-1, mitochondrial (UCRQ-1).